A 56-amino-acid chain; its full sequence is Ovomucoid (56 aa).

In terms of domain architecture, Kazal-like spans 6 to 56; sequence VDCSEYPKPACTLEYRPLCGSDNKTYANKCNFCNAVVESNGTLTLSHFGKC. Cystine bridges form between cysteine 8–cysteine 38, cysteine 16–cysteine 35, and cysteine 24–cysteine 56. Asparagine 45 carries N-linked (GlcNAc...) asparagine glycosylation.

The protein localises to the secreted. The chain is Ovomucoid from Callipepla californica (California quail).